We begin with the raw amino-acid sequence, 37 residues long: Large ribosomal subunit protein bL36c (37 aa).

It belongs to the bacterial ribosomal protein bL36 family.

It is found in the plastid. Its subcellular location is the chloroplast. The sequence is that of Large ribosomal subunit protein bL36c from Psilotum nudum (Whisk fern).